Consider the following 38-residue polypeptide: MKVRASVKKMCRNCKIVRRHGHVRVICSVDPKHKQRQG.

It belongs to the bacterial ribosomal protein bL36 family.

The chain is Large ribosomal subunit protein bL36 from Proteus mirabilis (strain HI4320).